The chain runs to 208 residues: MEDLLDLDEELRYSLATSRAKMGRRAQQESAQAENHLNGKNSSLTLTGETSSAKLPRCRQGGWAGDSVKASKFRRKASEEIEDFRLRPQSLNGSDYGGDIPIIPDLEEVQEEDFVLQVAAPPSIQIKRVMTYRDLDNDLMKYSAIQTLDGEIDLKLLTKVLAPEHEVREDDVGWDWDHLFTEVSSEVLTEWDPLQTEKEDPAGQARHT.

The residue at position 1 (Met-1) is an N-acetylmethionine. A disordered region spans residues 18–65 (SRAKMGRRAQQESAQAENHLNGKNSSLTLTGETSSAKLPRCRQGGWAG). Residues 28–53 (QESAQAENHLNGKNSSLTLTGETSSA) are compositionally biased toward polar residues. Ser-78 carries the phosphoserine modification.

Belongs to the IFT43 family. In terms of assembly, component of the IFT complex A (IFT-A) complex. IFT-A complex is divided into a core subcomplex composed of IFT122:IFT140:WDR19 which is associated with TULP3 and a peripheral subcomplex composed of IFT43:WDR35:TTC21B. Interacts directy with IFT122, WDR35 and TTC21B. Expressed in the retina, predominantly in the photoreceptor outer segment.

The protein localises to the cytoplasm. Its subcellular location is the cytoskeleton. It localises to the cell projection. The protein resides in the cilium. Its function is as follows. As a component of IFT complex A (IFT-A), a complex required for retrograde ciliary transport and entry into cilia of G protein-coupled receptors (GPCRs), it is involved in ciliogenesis. Involved in retrograde ciliary transport along microtubules from the ciliary tip to the base. This is Intraflagellar transport protein 43 homolog from Homo sapiens (Human).